We begin with the raw amino-acid sequence, 489 residues long: Rhamnulokinase (489 aa).

13-17 contacts ATP; sequence ASSGR. Cysteine 68 and cysteine 222 form a disulfide bridge. Residues glycine 83 and 236–238 each bind substrate; that span reads HDT. The Proton acceptor role is filled by aspartate 237. Residue threonine 259 coordinates ATP. A substrate-binding site is contributed by asparagine 296. Position 304 (glutamine 304) interacts with ATP. A disulfide bond links cysteine 353 and cysteine 370. Glycine 402 lines the ATP pocket. Residues cysteine 413 and cysteine 417 are joined by a disulfide bond.

The protein belongs to the rhamnulokinase family. It depends on Mg(2+) as a cofactor.

It catalyses the reaction L-rhamnulose + ATP = L-rhamnulose 1-phosphate + ADP + H(+). It participates in carbohydrate degradation; L-rhamnose degradation; glycerone phosphate from L-rhamnose: step 2/3. Its function is as follows. Involved in the catabolism of L-rhamnose (6-deoxy-L-mannose). Catalyzes the transfer of the gamma-phosphate group from ATP to the 1-hydroxyl group of L-rhamnulose to yield L-rhamnulose 1-phosphate. In Salmonella heidelberg (strain SL476), this protein is Rhamnulokinase.